Consider the following 245-residue polypeptide: MYMLNNMLNDVPTPWGMFFQDSATPNMEGMMELHNNVMFYLCMMLGFVSYMLYNMLTTYNHSVLPYKYLYHGQFIEIVWTTFPAMILLIIAFPSFILLYICDEVIAPAMTIKAMGLQWYWKYEYSDFIDDKGETIEFESYMIPEDLLEEGQLRQLDVDSPIVCPVDTHMRFIVTAADVIHDFAMPSLGIKIDAVPGRLNQTSALIQREGVYYGQCSELCGVMHSSMPIKIEAVSLGEFLAWIDEQ.

Residues methionine 1 to asparagine 36 are Mitochondrial intermembrane-facing. A helical transmembrane segment spans residues valine 37–leucine 56. Residues threonine 57–glutamate 76 lie on the Mitochondrial matrix side of the membrane. Residues isoleucine 77–cysteine 101 form a helical membrane-spanning segment. The Mitochondrial intermembrane segment spans residues aspartate 102 to glutamine 245. Cu cation-binding residues include histidine 180, cysteine 215, glutamate 217, cysteine 219, histidine 223, and methionine 226. Glutamate 217 contributes to the Mg(2+) binding site.

This sequence belongs to the cytochrome c oxidase subunit 2 family. Component of the cytochrome c oxidase (complex IV, CIV), a multisubunit enzyme composed of a catalytic core of 3 subunits and several supernumerary subunits. The complex exists as a monomer or a dimer and forms supercomplexes (SCs) in the inner mitochondrial membrane with ubiquinol-cytochrome c oxidoreductase (cytochrome b-c1 complex, complex III, CIII). The cofactor is Cu cation.

It is found in the mitochondrion inner membrane. It catalyses the reaction 4 Fe(II)-[cytochrome c] + O2 + 8 H(+)(in) = 4 Fe(III)-[cytochrome c] + 2 H2O + 4 H(+)(out). Its function is as follows. Component of the cytochrome c oxidase, the last enzyme in the mitochondrial electron transport chain which drives oxidative phosphorylation. The respiratory chain contains 3 multisubunit complexes succinate dehydrogenase (complex II, CII), ubiquinol-cytochrome c oxidoreductase (cytochrome b-c1 complex, complex III, CIII) and cytochrome c oxidase (complex IV, CIV), that cooperate to transfer electrons derived from NADH and succinate to molecular oxygen, creating an electrochemical gradient over the inner membrane that drives transmembrane transport and the ATP synthase. Cytochrome c oxidase is the component of the respiratory chain that catalyzes the reduction of oxygen to water. Electrons originating from reduced cytochrome c in the intermembrane space (IMS) are transferred via the dinuclear copper A center (CU(A)) of subunit 2 and heme A of subunit 1 to the active site in subunit 1, a binuclear center (BNC) formed by heme A3 and copper B (CU(B)). The BNC reduces molecular oxygen to 2 water molecules using 4 electrons from cytochrome c in the IMS and 4 protons from the mitochondrial matrix. In Dekkera bruxellensis (Brettanomyces custersii), this protein is Cytochrome c oxidase subunit 2 (COX2).